The primary structure comprises 110 residues: V-type proton ATPase subunit G 1 (110 aa).

It belongs to the V-ATPase G subunit family. As to quaternary structure, V-ATPase is a heteromultimeric enzyme composed of a peripheral catalytic V1 complex (components A to H) attached to an integral membrane V0 proton pore complex (components: a, c, c', c'' and d).

In terms of biological role, catalytic subunit of the peripheral V1 complex of vacuolar ATPase (V-ATPase). V-ATPase is responsible for acidifying a variety of intracellular compartments in eukaryotic cells. This chain is V-type proton ATPase subunit G 1 (VATG1), found in Nicotiana tabacum (Common tobacco).